The sequence spans 131 residues: UPF0102 protein YraN (131 aa).

The tract at residues 1–20 (MATVPTRSGSPRQLTTKQTG) is disordered.

The protein belongs to the UPF0102 family.

The protein is UPF0102 protein YraN of Escherichia coli O139:H28 (strain E24377A / ETEC).